Consider the following 569-residue polypeptide: Urease subunit alpha (569 aa).

Residues 131 to 569 (GGFDSHIHFI…LPMAQRYFLF (439 aa)) enclose the Urease domain. Ni(2+) contacts are provided by H136, H138, and K219. Residue K219 is modified to N6-carboxylysine. Position 221 (H221) interacts with substrate. 2 residues coordinate Ni(2+): H248 and H274. Residue H322 is the Proton donor of the active site. D362 serves as a coordination point for Ni(2+).

The protein belongs to the metallo-dependent hydrolases superfamily. Urease alpha subunit family. Heterotrimer of UreA (gamma), UreB (beta) and UreC (alpha) subunits. Three heterotrimers associate to form the active enzyme. It depends on Ni cation as a cofactor. In terms of processing, carboxylation allows a single lysine to coordinate two nickel ions.

It is found in the cytoplasm. It carries out the reaction urea + 2 H2O + H(+) = hydrogencarbonate + 2 NH4(+). It participates in nitrogen metabolism; urea degradation; CO(2) and NH(3) from urea (urease route): step 1/1. The sequence is that of Urease subunit alpha from Ruegeria pomeroyi (strain ATCC 700808 / DSM 15171 / DSS-3) (Silicibacter pomeroyi).